Here is a 699-residue protein sequence, read N- to C-terminus: Elongation factor G (699 aa).

Residues 8–288 (EDYRNFGIMA…AVVDYLPSPL (281 aa)) form the tr-type G domain. Residues 17-24 (AHIDAGKT), 86-90 (DTPGH), and 140-143 (NKMD) each bind GTP.

The protein belongs to the TRAFAC class translation factor GTPase superfamily. Classic translation factor GTPase family. EF-G/EF-2 subfamily.

The protein localises to the cytoplasm. Functionally, catalyzes the GTP-dependent ribosomal translocation step during translation elongation. During this step, the ribosome changes from the pre-translocational (PRE) to the post-translocational (POST) state as the newly formed A-site-bound peptidyl-tRNA and P-site-bound deacylated tRNA move to the P and E sites, respectively. Catalyzes the coordinated movement of the two tRNA molecules, the mRNA and conformational changes in the ribosome. The chain is Elongation factor G from Agrobacterium fabrum (strain C58 / ATCC 33970) (Agrobacterium tumefaciens (strain C58)).